Here is a 148-residue protein sequence, read N- to C-terminus: Large ribosomal subunit protein bL9 (148 aa).

The protein belongs to the bacterial ribosomal protein bL9 family.

Its function is as follows. Binds to the 23S rRNA. This is Large ribosomal subunit protein bL9 from Bacillus cereus (strain G9842).